We begin with the raw amino-acid sequence, 140 residues long: Histone H2B.1, sperm (140 aa).

The tract at residues 1–47 (MPSQRSPTKRSPTKRSPQKGAGKGGKGSKRGGKARRRGGAAVRRRRR) is disordered. 3 consecutive short sequence motifs (SPKK motif) follow at residues 6–9 (SPTK), 11–14 (SPTK), and 16–19 (SPQK). Basic residues-rich tracts occupy residues 7 to 17 (PTKRSPTKRSP) and 26 to 47 (KGSK…RRRR). A phosphoserine mark is found at Ser-11 and Ser-16. Ser-127 carries O-linked (GlcNAc) serine glycosylation. Lys-135 is covalently cross-linked (Glycyl lysine isopeptide (Lys-Gly) (interchain with G-Cter in ubiquitin)).

The protein belongs to the histone H2B family. In terms of assembly, the nucleosome is a histone octamer containing two molecules each of H2A, H2B, H3 and H4 assembled in one H3-H4 heterotetramer and two H2A-H2B heterodimers. The octamer wraps approximately 147 bp of DNA. Post-translationally, monoubiquitination of Lys-135 gives a specific tag for epigenetic transcriptional activation and is also prerequisite for histone H3 'Lys-4' and 'Lys-79' methylation. Phosphorylated on SPKK motifs 2 and 3; which may regulate DNA binding. Dephosphorylated during maturation of spermatids to mature sperm and rephosphorylated at fertilization. In terms of processing, glcNAcylation at Ser-127 promotes monoubiquitination of Lys-135. It fluctuates in response to extracellular glucose, and associates with transcribed genes.

The protein resides in the nucleus. Its subcellular location is the chromosome. Its function is as follows. Core component of nucleosome. Nucleosomes wrap and compact DNA into chromatin, limiting DNA accessibility to the cellular machineries which require DNA as a template. Histones thereby play a central role in transcription regulation, DNA repair, DNA replication and chromosomal stability. DNA accessibility is regulated via a complex set of post-translational modifications of histones, also called histone code, and nucleosome remodeling. This is Histone H2B.1, sperm from Strongylocentrotus purpuratus (Purple sea urchin).